A 421-amino-acid polypeptide reads, in one-letter code: Alpha-1-antitrypsin (421 aa).

Residues 1–24 (MASSSTWGLLLLAGLCCLVPISLA) form the signal peptide. Residues Asn73 and Asn110 are each glycosylated (N-linked (GlcNAc...) asparagine). The interval 376–395 (GATILEAIPMSIPPNVKFNK) is RCL. Ser386 is modified (phosphoserine).

This sequence belongs to the serpin family. Interacts with CELA2A. Interacts with ERGIC3 and LMAN1/ERGIC53. Interacts with PRSS1/Trypsin.

The protein resides in the secreted. Its function is as follows. Inhibitor of serine proteases. Its primary target is elastase, but it also has a moderate affinity for plasmin and thrombin. This chain is Alpha-1-antitrypsin (SERPINA1), found in Sus scrofa (Pig).